The sequence spans 1534 residues: Activating signal cointegrator 1 complex subunit 3 (1534 aa).

Residues 83 to 267 (ETAYNTNENL…FLHVNPFIGL (185 aa)) form the Helicase ATP-binding 1 domain. 96 to 103 (APTGAGKT) is an ATP binding site. Residues 209–212 (DEVH) carry the DEVH box motif. Residues 294–500 (QLHDMEEVCY…SLADNLNAEI (207 aa)) enclose the Helicase C-terminal 1 domain. In terms of domain architecture, SEC63 1 spans 576–849 (STDLGRTASH…GSEAVCIINF (274 aa)). The 176-residue stretch at 898 to 1073 (HTLYHTDTNV…WLGIGQVGLF (176 aa)) folds into the Helicase ATP-binding 2 domain. 911–918 (APTGSGKT) contributes to the ATP binding site. Positions 1015–1018 (DEIH) match the DEIH box motif. Positions 1106 to 1313 (PVFQAIRTHS…GTVTSKQDAM (208 aa)) constitute a Helicase C-terminal 2 domain. The SEC63 2 domain occupies 1374 to 1481 (PLTYGRISSY…TLPHIQKQEL (108 aa)).

The protein belongs to the helicase family.

The protein localises to the nucleus. It localises to the nucleus speckle. The protein resides in the cytoplasm. Its subcellular location is the cytosol. The enzyme catalyses Couples ATP hydrolysis with the unwinding of duplex DNA by translocating in the 3'-5' direction.. It catalyses the reaction ATP + H2O = ADP + phosphate + H(+). 3'-5' DNA helicase involved in repair of alkylated DNA. Promotes DNA unwinding to generate single-stranded substrate needed for alkbh3, enabling alkbh3 to process alkylated N3-methylcytosine (3mC) within double-stranded regions. Also involved in activation of the ribosome quality control (RQC) pathway, a pathway that degrades nascent peptide chains during problematic translation. Drives the splitting of stalled ribosomes. The polypeptide is Activating signal cointegrator 1 complex subunit 3 (ascc3) (Danio rerio (Zebrafish)).